The chain runs to 294 residues: Decaprenyl-diphosphate synthase subunit 2 (294 aa).

It belongs to the FPP/GGPP synthase family. In terms of assembly, heterotetramer of 2 dps1 and 2 dlp1 subunits.

It is found in the mitochondrion. The catalysed reaction is 7 isopentenyl diphosphate + (2E,6E)-farnesyl diphosphate = all-trans-decaprenyl diphosphate + 7 diphosphate. It participates in cofactor biosynthesis; ubiquinone biosynthesis. Functionally, supplies decaprenyl diphosphate, the precursor for the side chain of the isoprenoid quinones ubiquinone-10. The polypeptide is Decaprenyl-diphosphate synthase subunit 2 (dlp1) (Schizosaccharomyces pombe (strain 972 / ATCC 24843) (Fission yeast)).